We begin with the raw amino-acid sequence, 313 residues long: Porphobilinogen deaminase (313 aa).

Cysteine 242 carries the S-(dipyrrolylmethanemethyl)cysteine modification.

This sequence belongs to the HMBS family. Monomer. Requires dipyrromethane as cofactor.

It catalyses the reaction 4 porphobilinogen + H2O = hydroxymethylbilane + 4 NH4(+). The protein operates within porphyrin-containing compound metabolism; protoporphyrin-IX biosynthesis; coproporphyrinogen-III from 5-aminolevulinate: step 2/4. Functionally, tetrapolymerization of the monopyrrole PBG into the hydroxymethylbilane pre-uroporphyrinogen in several discrete steps. This Erwinia tasmaniensis (strain DSM 17950 / CFBP 7177 / CIP 109463 / NCPPB 4357 / Et1/99) protein is Porphobilinogen deaminase.